Consider the following 256-residue polypeptide: Thiazole synthase (256 aa).

Lys-96 functions as the Schiff-base intermediate with DXP in the catalytic mechanism. Residues Gly-157, 184–185, and 206–207 contribute to the 1-deoxy-D-xylulose 5-phosphate site; these read AG and NT.

It belongs to the ThiG family. As to quaternary structure, homotetramer. Forms heterodimers with either ThiH or ThiS.

It is found in the cytoplasm. The catalysed reaction is [ThiS sulfur-carrier protein]-C-terminal-Gly-aminoethanethioate + 2-iminoacetate + 1-deoxy-D-xylulose 5-phosphate = [ThiS sulfur-carrier protein]-C-terminal Gly-Gly + 2-[(2R,5Z)-2-carboxy-4-methylthiazol-5(2H)-ylidene]ethyl phosphate + 2 H2O + H(+). It participates in cofactor biosynthesis; thiamine diphosphate biosynthesis. Functionally, catalyzes the rearrangement of 1-deoxy-D-xylulose 5-phosphate (DXP) to produce the thiazole phosphate moiety of thiamine. Sulfur is provided by the thiocarboxylate moiety of the carrier protein ThiS. In vitro, sulfur can be provided by H(2)S. The protein is Thiazole synthase of Brucella melitensis biotype 2 (strain ATCC 23457).